The primary structure comprises 326 residues: DNA-directed RNA polymerase subunit alpha (326 aa).

Residues 1–231 (MQTNLLKPKI…DQLVVFAALE (231 aa)) form an alpha N-terminal domain (alpha-NTD) region. The alpha C-terminal domain (alpha-CTD) stretch occupies residues 247–326 (VDPMLMRPVD…ESWPPANLEK (80 aa)).

Belongs to the RNA polymerase alpha chain family. In terms of assembly, homodimer. The RNAP catalytic core consists of 2 alpha, 1 beta, 1 beta' and 1 omega subunit. When a sigma factor is associated with the core the holoenzyme is formed, which can initiate transcription.

It catalyses the reaction RNA(n) + a ribonucleoside 5'-triphosphate = RNA(n+1) + diphosphate. Functionally, DNA-dependent RNA polymerase catalyzes the transcription of DNA into RNA using the four ribonucleoside triphosphates as substrates. The polypeptide is DNA-directed RNA polymerase subunit alpha (Polynucleobacter asymbioticus (strain DSM 18221 / CIP 109841 / QLW-P1DMWA-1) (Polynucleobacter necessarius subsp. asymbioticus)).